A 720-amino-acid polypeptide reads, in one-letter code: Fatty acid CoA ligase Acsl3 (720 aa).

Residues 21-41 (ILLYFIHFIISLYTILTYIPF) form a helical; Signal-anchor for type III membrane protein membrane-spanning segment. At 42-720 (YFLCESKQEK…ADIERMYGRK (679 aa)) the chain is on the cytoplasmic side. A Phosphoserine modification is found at serine 683.

This sequence belongs to the ATP-dependent AMP-binding enzyme family. Requires Mg(2+) as cofactor. Predominantly expressed in the brain, and to a much lesser extent, in lung, adrenal gland, kidney, small intestine, and adipose tissue but not detected in heart or liver.

It localises to the mitochondrion outer membrane. The protein resides in the peroxisome membrane. Its subcellular location is the microsome membrane. It is found in the endoplasmic reticulum membrane. It carries out the reaction a long-chain fatty acid + ATP + CoA = a long-chain fatty acyl-CoA + AMP + diphosphate. The enzyme catalyses (5Z,8Z,11Z,14Z)-eicosatetraenoate + ATP + CoA = (5Z,8Z,11Z,14Z)-eicosatetraenoyl-CoA + AMP + diphosphate. It catalyses the reaction a medium-chain fatty acid + ATP + CoA = a medium-chain fatty acyl-CoA + AMP + diphosphate. The catalysed reaction is 15-hydroxy-(5Z,8Z,11Z,13E)-eicosatetraenoate + ATP + CoA = 15-hydroxy-(5Z,8Z,11Z,13E)-eicosatetraenoyl-CoA + AMP + diphosphate. It carries out the reaction 12-hydroxy-(5Z,8Z,10E,14Z)-eicosatetraenoate + ATP + CoA = 12-hydroxy-(5Z,8Z,10E,14Z)-eicosatetraenoyl-CoA + AMP + diphosphate. The enzyme catalyses 5-hydroxy-(6E,8Z,11Z,14Z)-eicosatetraenoate + ATP + CoA = 5-hydroxy-(6E,8Z,11Z,14Z)-eicosatetraenoyl-CoA + AMP + diphosphate. It catalyses the reaction 14,15-epoxy-(5Z,8Z,11Z)-eicosatrienoate + ATP + CoA = 14,15-epoxy-(5Z,8Z,11Z)-eicosatrienoyl-CoA + AMP + diphosphate. The catalysed reaction is 11,12-epoxy-(5Z,8Z,14Z)-eicosatrienoate + ATP + CoA = 11,12-epoxy-(5Z,8Z,14Z)-eicosatrienoyl-CoA + AMP + diphosphate. It carries out the reaction (E)-hexadec-2-enoate + ATP + CoA = (2E)-hexadecenoyl-CoA + AMP + diphosphate. The enzyme catalyses hexadecanoate + ATP + CoA = hexadecanoyl-CoA + AMP + diphosphate. It catalyses the reaction tetradecanoate + ATP + CoA = tetradecanoyl-CoA + AMP + diphosphate. The catalysed reaction is dodecanoate + ATP + CoA = dodecanoyl-CoA + AMP + diphosphate. It carries out the reaction octadecanoate + ATP + CoA = octadecanoyl-CoA + AMP + diphosphate. The enzyme catalyses eicosanoate + ATP + CoA = eicosanoyl-CoA + AMP + diphosphate. It catalyses the reaction (9Z)-octadecenoate + ATP + CoA = (9Z)-octadecenoyl-CoA + AMP + diphosphate. The catalysed reaction is (9Z)-hexadecenoate + ATP + CoA = (9Z)-hexadecenoyl-CoA + AMP + diphosphate. It carries out the reaction (9Z,12Z)-octadecadienoate + ATP + CoA = (9Z,12Z)-octadecadienoyl-CoA + AMP + diphosphate. The enzyme catalyses (9Z,12Z,15Z)-octadecatrienoate + ATP + CoA = (9Z,12Z,15Z)-octadecatrienoyl-CoA + AMP + diphosphate. It catalyses the reaction (4Z,7Z,10Z,13Z,16Z,19Z)-docosahexaenoate + ATP + CoA = (4Z,7Z,10Z,13Z,16Z,19Z)-docosahexaenoyl-CoA + AMP + diphosphate. The catalysed reaction is (5Z,8Z,11Z,14Z,17Z)-eicosapentaenoate + ATP + CoA = (5Z,8Z,11Z,14Z,17Z)-eicosapentaenoyl-CoA + AMP + diphosphate. It carries out the reaction a fatty acid + ATP + CoA = a fatty acyl-CoA + AMP + diphosphate. Its function is as follows. Catalyzes the conversion of long-chain fatty acids to their active form acyl-CoA for both synthesis of cellular lipids, and degradation via beta-oxidation. ACSL3 is required for the incorporation of fatty acids into phosphatidylcholine, the major phospholipid located on the surface of VLDL (very low density lipoproteins). Has mainly an anabolic role in energy metabolism. Mediates hepatic lipogenesis. Preferentially uses myristate, laurate, arachidonate and eicosapentaenoate as substrates. Both isoforms exhibit the same level of activity. The chain is Fatty acid CoA ligase Acsl3 from Rattus norvegicus (Rat).